Here is a 488-residue protein sequence, read N- to C-terminus: Glutamyl-tRNA(Gln) amidotransferase subunit A (488 aa).

Residues lysine 77 and serine 152 each act as charge relay system in the active site. Residue serine 176 is the Acyl-ester intermediate of the active site.

This sequence belongs to the amidase family. GatA subfamily. In terms of assembly, heterotrimer of A, B and C subunits.

The enzyme catalyses L-glutamyl-tRNA(Gln) + L-glutamine + ATP + H2O = L-glutaminyl-tRNA(Gln) + L-glutamate + ADP + phosphate + H(+). Its function is as follows. Allows the formation of correctly charged Gln-tRNA(Gln) through the transamidation of misacylated Glu-tRNA(Gln) in organisms which lack glutaminyl-tRNA synthetase. The reaction takes place in the presence of glutamine and ATP through an activated gamma-phospho-Glu-tRNA(Gln). The chain is Glutamyl-tRNA(Gln) amidotransferase subunit A from Streptococcus thermophilus (strain CNRZ 1066).